The primary structure comprises 131 residues: Glycine cleavage system H protein (131 aa).

Residues 24 to 106 (TVRIGITDYA…YGEGWLVDLE (83 aa)) form the Lipoyl-binding domain. K65 is subject to N6-lipoyllysine.

It belongs to the GcvH family. In terms of assembly, the glycine cleavage system is composed of four proteins: P, T, L and H. (R)-lipoate is required as a cofactor.

Its function is as follows. The glycine cleavage system catalyzes the degradation of glycine. The H protein shuttles the methylamine group of glycine from the P protein to the T protein. This Mycobacteroides abscessus (strain ATCC 19977 / DSM 44196 / CCUG 20993 / CIP 104536 / JCM 13569 / NCTC 13031 / TMC 1543 / L948) (Mycobacterium abscessus) protein is Glycine cleavage system H protein.